Here is a 739-residue protein sequence, read N- to C-terminus: MPEDRPIEDSPPIGEAQTDAPAGGCPAGFGRIKPPVAGGSNRDWWPNQLNLKILQKNPDVINPLDEDFDYRSAVQNLDVDALRADIVEVMHTSQDWWPADFGHYGPLFIRMAWHAAGTYRVSDGRGGAGAGMQRFAPLNSWPDNASLDKARRLLWPVKKKYGKNLSWADLIVYAGNVALEDMGFRTAGFAFGREDRWEPEEDVYWGPEQEWLDDKRYTGERDLENPLAAVQMGLIYVNPEGPNGNPDPQASAIDIRETFGRMAMNDVETAALIVGGHTFGKTHGNGDASLVGPEPEAAPLEEVGLGWRNPQGTGVGKDAITSGLEVTWTHTPTKWDNSFLEILYGNEWELTKSPAGANQWKPKDNGWANSVPLAHEDGKTHPSMLTSDLALRVDPIYEQITRRWLDHPEELAEEFAKAWFKLLHRDMGPVTRYLGPEVPKDTWLWQDNIPAGNDLSDDEVAKLKELIADSGLTVSQLVSTAWKAASTFRSSDLRGGANGGRIRLQPQLGWEANEPDELAQVVRKYEEIQKASGINVSFADLVVLGGNVGVEKAAKAAGFDVTVPFTPGRGDATQEETDVDSFAYLEPKADGFRNYLGKGSDLPAEFKLIDRANLLGLSAPEMTTLVGGLRVLDVNHGGTKHGVLTDKPGALTTDFFVNLLDMSTAWKPSPADDGTYIGTDRATGSPKWTGTRVDLVFASNSQLRALAEVYAEDDSKEKFVKDFVAAWTKVMDADRFDVA.

Residues 1-33 form a disordered region; it reads MPEDRPIEDSPPIGEAQTDAPAGGCPAGFGRIK. A cross-link (tryptophyl-tyrosyl-methioninium (Trp-Tyr) (with M-262)) is located at residues 113–236; the sequence is WHAAGTYRVS…LAAVQMGLIY (124 aa). Histidine 114 serves as the catalytic Proton acceptor. The segment at residues 236 to 262 is a cross-link (tryptophyl-tyrosyl-methioninium (Tyr-Met) (with W-113)); that stretch reads YVNPEGPNGNPDPQASAIDIRETFGRM. A heme b-binding site is contributed by histidine 277.

It belongs to the peroxidase family. Peroxidase/catalase subfamily. As to quaternary structure, homodimer or homotetramer. It depends on heme b as a cofactor. Post-translationally, formation of the three residue Trp-Tyr-Met cross-link is important for the catalase, but not the peroxidase activity of the enzyme.

The catalysed reaction is H2O2 + AH2 = A + 2 H2O. It carries out the reaction 2 H2O2 = O2 + 2 H2O. Bifunctional enzyme with both catalase and broad-spectrum peroxidase activity. May play a role in the intracellular survival of mycobacteria. The polypeptide is Catalase-peroxidase 1 (Mycolicibacterium smegmatis (strain ATCC 700084 / mc(2)155) (Mycobacterium smegmatis)).